The primary structure comprises 275 residues: Type III pantothenate kinase (275 aa).

Residue 9 to 16 coordinates ATP; that stretch reads DIGNTRLK. Substrate is bound by residues Tyr-114 and 121–124; that span reads GVDR. The active-site Proton acceptor is Asp-123. Thr-147 serves as a coordination point for ATP. Thr-209 contributes to the substrate binding site.

This sequence belongs to the type III pantothenate kinase family. In terms of assembly, homodimer. NH4(+) is required as a cofactor. Requires K(+) as cofactor.

Its subcellular location is the cytoplasm. The catalysed reaction is (R)-pantothenate + ATP = (R)-4'-phosphopantothenate + ADP + H(+). It participates in cofactor biosynthesis; coenzyme A biosynthesis; CoA from (R)-pantothenate: step 1/5. Catalyzes the phosphorylation of pantothenate (Pan), the first step in CoA biosynthesis. This chain is Type III pantothenate kinase, found in Cupriavidus pinatubonensis (strain JMP 134 / LMG 1197) (Cupriavidus necator (strain JMP 134)).